Consider the following 570-residue polypeptide: Proline--tRNA ligase (570 aa).

The protein belongs to the class-II aminoacyl-tRNA synthetase family. ProS type 1 subfamily. In terms of assembly, homodimer.

Its subcellular location is the cytoplasm. The enzyme catalyses tRNA(Pro) + L-proline + ATP = L-prolyl-tRNA(Pro) + AMP + diphosphate. In terms of biological role, catalyzes the attachment of proline to tRNA(Pro) in a two-step reaction: proline is first activated by ATP to form Pro-AMP and then transferred to the acceptor end of tRNA(Pro). As ProRS can inadvertently accommodate and process non-cognate amino acids such as alanine and cysteine, to avoid such errors it has two additional distinct editing activities against alanine. One activity is designated as 'pretransfer' editing and involves the tRNA(Pro)-independent hydrolysis of activated Ala-AMP. The other activity is designated 'posttransfer' editing and involves deacylation of mischarged Ala-tRNA(Pro). The misacylated Cys-tRNA(Pro) is not edited by ProRS. The protein is Proline--tRNA ligase of Desulfotalea psychrophila (strain LSv54 / DSM 12343).